The following is a 426-amino-acid chain: Outer capsid protein P8 (426 aa).

Belongs to the phytoreovirus outer capsid protein P8 family. In terms of assembly, homotrimer. Homomultimer.

The protein localises to the virion. The protein resides in the host cytoplasm. Its function is as follows. Capsid protein which self-assembles to form the outer icosahedral capsid with a T=13 symmetry, about 70 nm in diameter and consisting of 260 P8 trimers. Mediates the secretion of assembled virus-like particles from host insect cells. The protein is Outer capsid protein P8 of Nephotettix cincticeps (Green rice leafhopper).